Here is a 143-residue protein sequence, read N- to C-terminus: Transcriptional regulator MraZ (143 aa).

SpoVT-AbrB domains lie at Thr-5–Glu-47 and Thr-76–Ala-119.

Belongs to the MraZ family. As to quaternary structure, forms oligomers.

It localises to the cytoplasm. The protein resides in the nucleoid. This chain is Transcriptional regulator MraZ, found in Mycobacterium sp. (strain JLS).